Reading from the N-terminus, the 679-residue chain is Pollen receptor-like kinase 4 (679 aa).

The first 39 residues, M1 to S39, serve as a signal peptide directing secretion. LRR repeat units lie at residues I118–F141, G142–G165, H167–P191, L193–L217, and S234–S257. Over residues L252–P269 the composition is skewed to low complexity. The segment at L252 to E271 is disordered. A helical membrane pass occupies residues F278–V298. The tract at residues S311–S344 is disordered. Residues D319–A336 are compositionally biased toward basic and acidic residues. The 275-residue stretch at R372 to L646 folds into the Protein kinase domain. The residue at position 374 (S374) is a Phosphoserine. ATP contacts are provided by residues L378–S386 and K400. S452 and S455 each carry phosphoserine. Phosphothreonine is present on T472. The residue at position 542 (Y542) is a Phosphotyrosine.

This sequence belongs to the protein kinase superfamily. Ser/Thr protein kinase family. As to quaternary structure, interacts in vitro with ROPGEF1 (via PRONE domain). Interacts weakly with the GRI peptide. In terms of tissue distribution, expressed in pollen and/or in flowers, but not in leaves.

It localises to the membrane. The enzyme catalyses L-seryl-[protein] + ATP = O-phospho-L-seryl-[protein] + ADP + H(+). It carries out the reaction L-threonyl-[protein] + ATP = O-phospho-L-threonyl-[protein] + ADP + H(+). Functionally, receptor-like kinase involved in the control of pollen germination and pollen tube polar growth. Can phosphorylate ROPGEF1 in vitro. The chain is Pollen receptor-like kinase 4 from Arabidopsis thaliana (Mouse-ear cress).